Here is a 172-residue protein sequence, read N- to C-terminus: Small ribosomal subunit protein uS5 (172 aa).

Positions 17–80 (LREKMISVNR…EQARRNMFKV (64 aa)) constitute an S5 DRBM domain.

Belongs to the universal ribosomal protein uS5 family. In terms of assembly, part of the 30S ribosomal subunit. Contacts proteins S4 and S8.

In terms of biological role, with S4 and S12 plays an important role in translational accuracy. Located at the back of the 30S subunit body where it stabilizes the conformation of the head with respect to the body. In Burkholderia thailandensis (strain ATCC 700388 / DSM 13276 / CCUG 48851 / CIP 106301 / E264), this protein is Small ribosomal subunit protein uS5.